Here is a 131-residue protein sequence, read N- to C-terminus: Phosphoribosyl-AMP cyclohydrolase (131 aa).

D78 serves as a coordination point for Mg(2+). A Zn(2+)-binding site is contributed by C79. Mg(2+) is bound by residues D80 and D82. Residues C96 and C103 each contribute to the Zn(2+) site.

The protein belongs to the PRA-CH family. In terms of assembly, homodimer. Mg(2+) serves as cofactor. The cofactor is Zn(2+).

The protein resides in the cytoplasm. The enzyme catalyses 1-(5-phospho-beta-D-ribosyl)-5'-AMP + H2O = 1-(5-phospho-beta-D-ribosyl)-5-[(5-phospho-beta-D-ribosylamino)methylideneamino]imidazole-4-carboxamide. The protein operates within amino-acid biosynthesis; L-histidine biosynthesis; L-histidine from 5-phospho-alpha-D-ribose 1-diphosphate: step 3/9. Catalyzes the hydrolysis of the adenine ring of phosphoribosyl-AMP. In Thioalkalivibrio sulfidiphilus (strain HL-EbGR7), this protein is Phosphoribosyl-AMP cyclohydrolase.